We begin with the raw amino-acid sequence, 25 residues long: Xenoposin precursor fragment BM3 (25 aa).

In terms of tissue distribution, expressed by the skin glands.

It is found in the secreted. Antimicrobial peptide. The protein is Xenoposin precursor fragment BM3 of Xenopus boumbaensis (Mawa clawed frog).